The primary structure comprises 145 residues: Large ribosomal subunit protein bL9 (145 aa).

It belongs to the bacterial ribosomal protein bL9 family.

Its function is as follows. Binds to the 23S rRNA. In Mesomycoplasma hyopneumoniae (strain 232) (Mycoplasma hyopneumoniae), this protein is Large ribosomal subunit protein bL9.